Consider the following 252-residue polypeptide: Triosephosphate isomerase (252 aa).

Residue 10-12 (NWK) coordinates substrate. H96 functions as the Electrophile in the catalytic mechanism. E168 functions as the Proton acceptor in the catalytic mechanism. Substrate contacts are provided by residues G174, S214, and 235 to 236 (GG).

It belongs to the triosephosphate isomerase family. As to quaternary structure, homodimer.

The protein resides in the cytoplasm. The catalysed reaction is D-glyceraldehyde 3-phosphate = dihydroxyacetone phosphate. Its pathway is carbohydrate biosynthesis; gluconeogenesis. It participates in carbohydrate degradation; glycolysis; D-glyceraldehyde 3-phosphate from glycerone phosphate: step 1/1. Its function is as follows. Involved in the gluconeogenesis. Catalyzes stereospecifically the conversion of dihydroxyacetone phosphate (DHAP) to D-glyceraldehyde-3-phosphate (G3P). The sequence is that of Triosephosphate isomerase from Lactococcus lactis subsp. cremoris (strain MG1363).